The following is a 183-amino-acid chain: MKENKPVDPYAKYNEQSNIIAKIIFASRWLQVPIYLGLIVTLAIYSYKFIKGLWELVINVNDMDSNTIMLGVLNLIDVVMIANLLVMVTIGGYEIFVSKLRTRNHPDQPEWMSHVNATVLKVKLSMSIIGISSIHMLQTFVNASNMPEKTMMWQLLLHLGFLVSAIALAYTDKILYSTSHKTH.

A run of 3 helical transmembrane segments spans residues Leu-30–Ile-50, Ile-68–Val-88, and Thr-150–Tyr-170.

The protein belongs to the UPF0114 family.

The protein resides in the cell membrane. The polypeptide is UPF0114 protein HI_0507 (Haemophilus influenzae (strain ATCC 51907 / DSM 11121 / KW20 / Rd)).